The chain runs to 399 residues: MLIVEGVRIAEELENLPKEVRIFDTTLRDGEQTPGISFTKEQKLMIARQLAKLGVASIEAGFPAVSQGEFEAVKAIAREGLGPEIVALARANKRDIDKALDADVDAIHVFIAASDIHLKYKLRMTREEALRRAVEAVEYAKSHGVTVEFSPEDGTRADLNYLYTMVEAVVDAGADRVDIPDTVGVMTPTRMKYLIKFILPAAKGRIVSVHCHNDFGLAVANSIAGIEAGARQAHVTVNGIGERAGNAALEEVVAALEFLLNVRTGVNTKLLYETSLLVSKITGIPIPPNKPIVGENVFSHESGIHVHGVINNPFTYEPIQPEMVGQRRRIVLGKHSGRHGVEYALKTLGYPTDPDVVLRVLDEVKRLGDMGIRVTEDKLREIVEKVLEERERAKEAATS.

A Pyruvate carboxyltransferase domain is found at 20-272 (VRIFDTTLRD…RTGVNTKLLY (253 aa)). The a divalent metal cation site is built by Asp-29, His-210, His-212, and Asn-246.

It belongs to the alpha-IPM synthase/homocitrate synthase family. In terms of assembly, homodimer. A divalent metal cation serves as cofactor.

It carries out the reaction 3-methyl-2-oxobutanoate + acetyl-CoA + H2O = (2S)-2-isopropylmalate + CoA + H(+). The protein operates within amino-acid biosynthesis; L-leucine biosynthesis; L-leucine from 3-methyl-2-oxobutanoate: step 1/4. Functionally, catalyzes the condensation of the acetyl group of acetyl-CoA with 3-methyl-2-oxobutanoate (2-oxoisovalerate) to form 3-carboxy-3-hydroxy-4-methylpentanoate (2-isopropylmalate). This chain is Probable 2-isopropylmalate synthase (leuA), found in Ignicoccus hospitalis (strain KIN4/I / DSM 18386 / JCM 14125).